We begin with the raw amino-acid sequence, 308 residues long: Uricase-2 (308 aa).

Residues lysine 17 and threonine 63 each act as charge relay system in the active site. Positions 63, 64, 165, 182, 237, 238, and 264 each coordinate urate. Histidine 266 serves as the catalytic Charge relay system. The Microbody targeting signal signature appears at 306–308 (SKL).

This sequence belongs to the uricase family. Homotetramer. As to expression, expressed predominantly in the uninfected cells of the central tissue of the root nodule. Also expressed in the nodule parenchyma cells and vascular tissue, in the roots, stems and leaves of uninfected adult plants, and in the cotyledons, roots and hypocotyls of developing seedlings. Localized to the metaxylem parenchyma cells and phloem fibers of developing roots.

It localises to the peroxisome. The catalysed reaction is urate + O2 + H2O = 5-hydroxyisourate + H2O2. It participates in purine metabolism; urate degradation; (S)-allantoin from urate: step 1/3. Its function is as follows. Catalyzes the oxidation of uric acid to 5-hydroxyisourate, which is further processed to form (S)-allantoin. In Phaseolus vulgaris (Kidney bean), this protein is Uricase-2 (URIII).